A 509-amino-acid chain; its full sequence is Leucine-rich repeat-containing protein 14 (509 aa).

Residues 111 to 146 (RQRLRLLDMTGMQEEGLEQNPDTMSLWSRTVTLAKA) form an LRR 1; degenerate repeat. Residues 210–234 (RLQCRDFRAEELSLRSTAGLLELLN) form an LRR 2; degenerate repeat. The stretch at 235-262 (PGSVRQIDLRFNNLGLSGLNVLLPHMAK) is one LRR 3; degenerate repeat. Residues 263-298 (FSHLQSLKLPYSNVDVRRLSPVMEEGLQSFASQLGQ) form an LRR 4; degenerate repeat. LRR repeat units lie at residues 299–323 (LGAL…LGGL), 324–355 (QRPL…SSLR), 356–374 (KLDL…PFLH), 380–407 (SGHL…ILCR), and 408–432 (CSWL…VLQN).

The protein belongs to the PRAME family. LRRC14 subfamily.

Its subcellular location is the cytoplasm. The polypeptide is Leucine-rich repeat-containing protein 14 (Xenopus laevis (African clawed frog)).